The following is a 142-amino-acid chain: Large ribosomal subunit protein uL11 (142 aa).

This sequence belongs to the universal ribosomal protein uL11 family. Part of the ribosomal stalk of the 50S ribosomal subunit. Interacts with L10 and the large rRNA to form the base of the stalk. L10 forms an elongated spine to which L12 dimers bind in a sequential fashion forming a multimeric L10(L12)X complex. In terms of processing, one or more lysine residues are methylated.

In terms of biological role, forms part of the ribosomal stalk which helps the ribosome interact with GTP-bound translation factors. This chain is Large ribosomal subunit protein uL11, found in Dictyoglomus turgidum (strain DSM 6724 / Z-1310).